The following is a 588-amino-acid chain: DNA mismatch repair protein MutL (588 aa).

This sequence belongs to the DNA mismatch repair MutL/HexB family.

This protein is involved in the repair of mismatches in DNA. It is required for dam-dependent methyl-directed DNA mismatch repair. May act as a 'molecular matchmaker', a protein that promotes the formation of a stable complex between two or more DNA-binding proteins in an ATP-dependent manner without itself being part of a final effector complex. The sequence is that of DNA mismatch repair protein MutL from Methanocorpusculum labreanum (strain ATCC 43576 / DSM 4855 / Z).